The primary structure comprises 236 residues: Small ribosomal subunit protein uS3 (236 aa).

The region spanning 39–107 is the KH type-2 domain; sequence IREFLTEELK…DTSLNIVEVR (69 aa). The tract at residues 214–236 is disordered; that stretch reads ASERRAVEGDNQGSSSNRRRENA.

Belongs to the universal ribosomal protein uS3 family. Part of the 30S ribosomal subunit. Forms a tight complex with proteins S10 and S14.

Its function is as follows. Binds the lower part of the 30S subunit head. Binds mRNA in the 70S ribosome, positioning it for translation. This is Small ribosomal subunit protein uS3 from Brucella canis (strain ATCC 23365 / NCTC 10854 / RM-666).